A 316-amino-acid chain; its full sequence is Thymidylate synthase (316 aa).

DUMP-binding positions include Arg23 and 178 to 179; that span reads RR. Cys198 serves as the catalytic Nucleophile. Residues 218–221, Asn229, and 259–261 contribute to the dUMP site; these read RSAD and HLY. Asp221 contributes to the (6R)-5,10-methylene-5,6,7,8-tetrahydrofolate binding site. Residue Ala315 coordinates (6R)-5,10-methylene-5,6,7,8-tetrahydrofolate.

The protein belongs to the thymidylate synthase family. Bacterial-type ThyA subfamily. Homodimer.

Its subcellular location is the cytoplasm. The catalysed reaction is dUMP + (6R)-5,10-methylene-5,6,7,8-tetrahydrofolate = 7,8-dihydrofolate + dTMP. Its pathway is pyrimidine metabolism; dTTP biosynthesis. Functionally, catalyzes the reductive methylation of 2'-deoxyuridine-5'-monophosphate (dUMP) to 2'-deoxythymidine-5'-monophosphate (dTMP) while utilizing 5,10-methylenetetrahydrofolate (mTHF) as the methyl donor and reductant in the reaction, yielding dihydrofolate (DHF) as a by-product. This enzymatic reaction provides an intracellular de novo source of dTMP, an essential precursor for DNA biosynthesis. In Lacticaseibacillus paracasei (strain ATCC 334 / BCRC 17002 / CCUG 31169 / CIP 107868 / KCTC 3260 / NRRL B-441) (Lactobacillus paracasei), this protein is Thymidylate synthase.